The sequence spans 629 residues: 1-deoxy-D-xylulose-5-phosphate synthase (629 aa).

Residues H78 and 119 to 121 (AHS) contribute to the thiamine diphosphate site. D150 contacts Mg(2+). Thiamine diphosphate contacts are provided by residues 151 to 152 (GA), N179, Y286, and E368. N179 lines the Mg(2+) pocket.

This sequence belongs to the transketolase family. DXPS subfamily. In terms of assembly, homodimer. The cofactor is Mg(2+). Thiamine diphosphate is required as a cofactor.

It catalyses the reaction D-glyceraldehyde 3-phosphate + pyruvate + H(+) = 1-deoxy-D-xylulose 5-phosphate + CO2. Its pathway is metabolic intermediate biosynthesis; 1-deoxy-D-xylulose 5-phosphate biosynthesis; 1-deoxy-D-xylulose 5-phosphate from D-glyceraldehyde 3-phosphate and pyruvate: step 1/1. Its function is as follows. Catalyzes the acyloin condensation reaction between C atoms 2 and 3 of pyruvate and glyceraldehyde 3-phosphate to yield 1-deoxy-D-xylulose-5-phosphate (DXP). The sequence is that of 1-deoxy-D-xylulose-5-phosphate synthase from Acidovorax sp. (strain JS42).